Here is a 536-residue protein sequence, read N- to C-terminus: Phosphoenolpyruvate carboxykinase (ATP) (536 aa).

Residues Arg61, Tyr195, and Lys201 each contribute to the substrate site. ATP is bound by residues Lys201, His220, and 236–244 (GLSGTGKTT). Residues Lys201 and His220 each coordinate Mn(2+). Asp257 contributes to the Mn(2+) binding site. Glu285, Arg322, and Thr447 together coordinate ATP. Residue Arg322 participates in substrate binding.

Belongs to the phosphoenolpyruvate carboxykinase (ATP) family. The cofactor is Mn(2+).

Its subcellular location is the cytoplasm. The catalysed reaction is oxaloacetate + ATP = phosphoenolpyruvate + ADP + CO2. The protein operates within carbohydrate biosynthesis; gluconeogenesis. Functionally, involved in the gluconeogenesis. Catalyzes the conversion of oxaloacetate (OAA) to phosphoenolpyruvate (PEP) through direct phosphoryl transfer between the nucleoside triphosphate and OAA. The polypeptide is Phosphoenolpyruvate carboxykinase (ATP) (Brucella suis biovar 1 (strain 1330)).